A 571-amino-acid polypeptide reads, in one-letter code: MGTLQSWRKAYGALKDSTKVGLVRVNSEYADLDVAIVKATNHVECPPKDRHLRKIFAATSVTRARADVAYCIHALSRRLHKTRNWTVALKTLIVIHRLLREGDPTFREELLNFSQRGRILQLSNFKDDSSPIAWDCSAWVRTYALFLEERLECFRVLKYDTEAERLPKSNPGQDKGYSRTRDLDGEELLEQLPALQQLLYRLIGCRPEGAANHNHVIQYALALVLKESFKVYCAINDGIINLIDKFFEMAKHEAITSLEIYKRAGQQARSLSDFYEACKGLELARNFQFPVLREPPQSFLTTMEEYIKEAPRVVDVPAEPLLLTYRPDDGLTTEDTEPSHEEREMLPSDDVVVVSEETEPSPPPPPSANAQNFIDTDDLWGLNTGAPDTSVIEDQNALALAIVSTDADPPTPHFGQPNNYDPTGWELALVTAPSSDISASTERKLAGGLDTLTLSSLYDDGAYIASQRPVYGAPAPNPFASHDPFASSNGTAPPPQQQAVNNPFGAYQQTYQHQPQPTYQHQSNPPTNNSNPFGDFGEFPVNPVSQQPNTSGYGDFSVNQHNNPFRSTGLI.

In terms of domain architecture, ENTH spans 24-161 (RVNSEYADLD…ECFRVLKYDT (138 aa)). Disordered stretches follow at residues 325 to 346 (YRPD…REML) and 474 to 571 (PAPN…TGLI). Residues 337–346 (EPSHEEREML) show a composition bias toward basic and acidic residues. The span at 508–522 (QQTYQHQPQPTYQHQ) shows a compositional bias: low complexity. 2 stretches are compositionally biased toward polar residues: residues 523 to 532 (SNPPTNNSNP) and 543 to 571 (PVSQ…TGLI).

The protein resides in the membrane. The protein localises to the clathrin-coated pit. Its subcellular location is the golgi apparatus. It is found in the cytoplasmic vesicle. It localises to the clathrin-coated vesicle. This Arabidopsis thaliana (Mouse-ear cress) protein is Putative clathrin assembly protein At2g01600.